The following is a 161-amino-acid chain: MSSFTHFNDQGRAKMVDISDKKATVRTAIACSSIVVTKEIYDKISHNEIGKGDVLAVAQIAGIMAAKRTSDIIPMCHPLLLKGVDVSFDWKQSDEQYRLLIEVKVKTEGSTGVEMEALTAASATALTVYDMCKAVDKGMIIGETYLLEKTGGKSGDYARKS.

Substrate contacts are provided by residues 75–77 and 115–116; these read MCH and ME. Asp130 is a catalytic residue.

The protein belongs to the MoaC family. Homohexamer; trimer of dimers.

The enzyme catalyses (8S)-3',8-cyclo-7,8-dihydroguanosine 5'-triphosphate = cyclic pyranopterin phosphate + diphosphate. It functions in the pathway cofactor biosynthesis; molybdopterin biosynthesis. Its function is as follows. Catalyzes the conversion of (8S)-3',8-cyclo-7,8-dihydroguanosine 5'-triphosphate to cyclic pyranopterin monophosphate (cPMP). This Bacillus cereus (strain ATCC 10987 / NRS 248) protein is Cyclic pyranopterin monophosphate synthase.